A 127-amino-acid chain; its full sequence is Glycine cleavage system H protein (127 aa).

The region spanning 24–105 is the Lipoyl-binding domain; the sequence is TALVGITDFA…YNDGWLVKMK (82 aa). Lys-65 is subject to N6-lipoyllysine.

The protein belongs to the GcvH family. As to quaternary structure, the glycine cleavage system is composed of four proteins: P, T, L and H. Requires (R)-lipoate as cofactor.

Its function is as follows. The glycine cleavage system catalyzes the degradation of glycine. The H protein shuttles the methylamine group of glycine from the P protein to the T protein. The polypeptide is Glycine cleavage system H protein (Pelodictyon phaeoclathratiforme (strain DSM 5477 / BU-1)).